The sequence spans 408 residues: Phosphoglycerate kinase (408 aa).

Residues 22 to 24, R39, 60 to 63, R117, and R157 each bind substrate; these read DIN and HQSR. ATP contacts are provided by residues E332 and 358-361; that span reads GGHT.

This sequence belongs to the phosphoglycerate kinase family. As to quaternary structure, monomer.

It localises to the cytoplasm. The enzyme catalyses (2R)-3-phosphoglycerate + ATP = (2R)-3-phospho-glyceroyl phosphate + ADP. It functions in the pathway carbohydrate degradation; glycolysis; pyruvate from D-glyceraldehyde 3-phosphate: step 2/5. The chain is Phosphoglycerate kinase (pgk) from Thermoplasma acidophilum (strain ATCC 25905 / DSM 1728 / JCM 9062 / NBRC 15155 / AMRC-C165).